Consider the following 223-residue polypeptide: Deoxyribose-phosphate aldolase (223 aa).

The active-site Proton donor/acceptor is the Asp-89. Catalysis depends on Lys-152, which acts as the Schiff-base intermediate with acetaldehyde. The active-site Proton donor/acceptor is the Lys-181.

Belongs to the DeoC/FbaB aldolase family. DeoC type 1 subfamily.

It localises to the cytoplasm. It catalyses the reaction 2-deoxy-D-ribose 5-phosphate = D-glyceraldehyde 3-phosphate + acetaldehyde. It participates in carbohydrate degradation; 2-deoxy-D-ribose 1-phosphate degradation; D-glyceraldehyde 3-phosphate and acetaldehyde from 2-deoxy-alpha-D-ribose 1-phosphate: step 2/2. Functionally, catalyzes a reversible aldol reaction between acetaldehyde and D-glyceraldehyde 3-phosphate to generate 2-deoxy-D-ribose 5-phosphate. The protein is Deoxyribose-phosphate aldolase of Bacillus mycoides (strain KBAB4) (Bacillus weihenstephanensis).